The following is a 259-amino-acid chain: UPF0246 protein Pmen_1032 (259 aa).

It belongs to the UPF0246 family.

The polypeptide is UPF0246 protein Pmen_1032 (Ectopseudomonas mendocina (strain ymp) (Pseudomonas mendocina)).